Consider the following 1191-residue polypeptide: WASH complex subunit homolog 5 (1191 aa).

This sequence belongs to the strumpellin family. In terms of assembly, component of the WASH complex.

The protein localises to the early endosome. Acts at least in part as component of the WASH complex which may regulate wash nucleation-promoting factor (NPF) activity and is required for its membrane targeting during endosomal sorting. During embryogenesis, not involved in the wash-dependent developmental migration of hemocytes anteriorly from the tail. This Drosophila melanogaster (Fruit fly) protein is WASH complex subunit homolog 5.